The sequence spans 306 residues: MREAAGLEARGLKSPPILKGQDGEGSLQVHQSDDMKIEGAKVFAVYGKGGIGKSTTSSNLSAAFSKLGKKVLQIGCDPKHDSTFTLTGMLQPTVIDILKSVDFHAEELRPEDFVTQGYNGVQCIEAGGPPAGTGCGGYVVGQTVKLLKQHHLLEDTDVVLFDVLGDVVCGGFAAPLQHADRALIVTANDFDSIYAMNRIIAAVQAKSKNYNVRLAGCVANRSKDTDEVDRYCDVVGFKRIGHMPDVDAIRRSRLKKKTLFEMPDEEDIVQCRAEYIRLAEKLYAGTDPLAPAPLEDRDIFELLGFD.

Residues 1-31 (MREAAGLEARGLKSPPILKGQDGEGSLQVHQ) are disordered. Residues 50 to 55 (GIGKST) and K79 contribute to the ATP site. S54 contributes to the Mg(2+) binding site. Positions 135 and 169 each coordinate [4Fe-4S] cluster. 220–221 (NR) is an ATP binding site.

Belongs to the NifH/BchL/ChlL family. In terms of assembly, homodimer. Protochlorophyllide reductase is composed of three subunits; BchL, BchN and BchB. The cofactor is [4Fe-4S] cluster.

The enzyme catalyses chlorophyllide a + oxidized 2[4Fe-4S]-[ferredoxin] + 2 ADP + 2 phosphate = protochlorophyllide a + reduced 2[4Fe-4S]-[ferredoxin] + 2 ATP + 2 H2O. Its pathway is porphyrin-containing compound metabolism; bacteriochlorophyll biosynthesis (light-independent). In terms of biological role, component of the dark-operative protochlorophyllide reductase (DPOR) that uses Mg-ATP and reduced ferredoxin to reduce ring D of protochlorophyllide (Pchlide) to form chlorophyllide a (Chlide). This reaction is light-independent. The L component serves as a unique electron donor to the NB-component of the complex, and binds Mg-ATP. The protein is Light-independent protochlorophyllide reductase iron-sulfur ATP-binding protein of Jannaschia sp. (strain CCS1).